The chain runs to 602 residues: Glutathione-regulated potassium-efflux system protein KefB (602 aa).

The next 13 membrane-spanning stretches (helical) occupy residues 4 to 24 (TGLL…VPIA), 29 to 49 (IGAV…GLGF), 55 to 75 (EILH…GLEL), 87 to 107 (IFGV…ALLY), 115 to 135 (AAVI…LQLM), 152 to 172 (VLLF…ILAG), 181 to 201 (VKIG…RYLL), 207 to 227 (YIVA…VVLG), 230 to 250 (LFMD…GILL), 261 to 281 (IAIE…VGMA), 296 to 318 (LGVL…VFGL), 326 to 346 (FAGV…AAFS), and 356 to 376 (ALLL…MQVI). One can recognise an RCK N-terminal domain in the interval 400 to 519 (DPQVIIVGFG…NGVKDFTRET (120 aa)).

The protein belongs to the monovalent cation:proton antiporter 2 (CPA2) transporter (TC 2.A.37) family. KefB subfamily. In terms of assembly, interacts with the regulatory subunit KefG.

Its subcellular location is the cell inner membrane. Pore-forming subunit of a potassium efflux system that confers protection against electrophiles. Catalyzes K(+)/H(+) antiport. This is Glutathione-regulated potassium-efflux system protein KefB from Yersinia pestis bv. Antiqua (strain Antiqua).